The chain runs to 313 residues: Short-chain dehydrogenase/reductase family 9C member 7 (313 aa).

Residue Phe-29 to Leu-53 participates in NADP(+) binding. Ser-160 contacts substrate. Tyr-172 (proton acceptor) is an active-site residue. The residue at position 185 (Ser-185) is a Phosphoserine.

This sequence belongs to the short-chain dehydrogenases/reductases (SDR) family. Expressed in the skin. Expressed in granular and cornified layers of the epidermis (at protein level). Highly expressed in liver.

Its subcellular location is the cytoplasm. The catalysed reaction is a N-[omega-(9R,10R)-epoxy-(13R)-hydroxy-(11E)-octadecenoyloxy]acyl-beta-D-glucosyl-(1&lt;-&gt;1)-sphing-4E-enine + NAD(+) = a N-[omega-(9R,10R)-epoxy-13-oxo-(11E)-octadecenoyloxy]acyl-beta-D-glucosyl-(1&lt;-&gt;1)-sphing-4E-enine + NADH + H(+). It carries out the reaction a N-[omega-(9R,10R)-epoxy-(13R)-hydroxy-(11E)-octadecenoyloxy]-acylsphing-4E-enine + NAD(+) = a N-[omega-(9R,10R)-epoxy-13-oxo-(11E)-octadecenoyloxy]-acylsphing-4E-enine + NADH + H(+). Plays a crucial role in the formation of the epidermal permeability barrier. Catalyzes the NAD+-dependent dehydrogenation of the linoleate 9,10-trans-epoxy-11E-13-alcohol esterified in omega-O-acylceramides (such as in N-[omega-(9R,10R)-epoxy-(13R)-hydroxy-(11E)-octadecenoyloxy]-acylsphing-4E-enine) to the corresponding 13-ketone, the reactive moiety required for binding of epidermal ceramides to proteins. Displays weak conversion of all-trans-retinal to all-trans-retinol in the presence of NADH. Has apparently no steroid dehydrogenase activity. The protein is Short-chain dehydrogenase/reductase family 9C member 7 (SDR9C7) of Homo sapiens (Human).